Reading from the N-terminus, the 481-residue chain is UDP-N-acetylmuramoyl-L-alanyl-D-glutamate--L-lysine ligase (481 aa).

UDP-N-acetyl-alpha-D-muramoyl-L-alanyl-D-glutamate is bound at residue Ser42. 118–124 (GTKGKTT) provides a ligand contact to ATP. UDP-N-acetyl-alpha-D-muramoyl-L-alanyl-D-glutamate contacts are provided by residues Asn158, 160–161 (TT), Ser187, and Arg195. N6-carboxylysine is present on Lys229. The L-lysine recognition motif motif lies at 404 to 407 (DDPN).

This sequence belongs to the MurCDEF family. MurE subfamily. Carboxylation is probably crucial for Mg(2+) binding and, consequently, for the gamma-phosphate positioning of ATP.

Its subcellular location is the cytoplasm. It catalyses the reaction UDP-N-acetyl-alpha-D-muramoyl-L-alanyl-D-glutamate + L-lysine + ATP = UDP-N-acetyl-alpha-D-muramoyl-L-alanyl-gamma-D-glutamyl-L-lysine + ADP + phosphate + H(+). It functions in the pathway cell wall biogenesis; peptidoglycan biosynthesis. Its function is as follows. Catalyzes the addition of L-lysine to the nucleotide precursor UDP-N-acetylmuramoyl-L-alanyl-D-glutamate (UMAG) in the biosynthesis of bacterial cell-wall peptidoglycan. This chain is UDP-N-acetylmuramoyl-L-alanyl-D-glutamate--L-lysine ligase, found in Streptococcus thermophilus (strain ATCC BAA-491 / LMD-9).